A 684-amino-acid polypeptide reads, in one-letter code: DNA ligase (684 aa).

Residues 48 to 52, 97 to 98, and glutamate 129 each bind NAD(+); these read DYEYD and SL. Catalysis depends on lysine 131, which acts as the N6-AMP-lysine intermediate. The NAD(+) site is built by arginine 152, glutamate 189, lysine 310, and lysine 334. Zn(2+)-binding residues include cysteine 429, cysteine 432, cysteine 447, and cysteine 452. The BRCT domain maps to 609 to 684; that stretch reads AQEGSLSGMS…ISWEELQAMI (76 aa).

The protein belongs to the NAD-dependent DNA ligase family. LigA subfamily. Requires Mg(2+) as cofactor. Mn(2+) is required as a cofactor.

The enzyme catalyses NAD(+) + (deoxyribonucleotide)n-3'-hydroxyl + 5'-phospho-(deoxyribonucleotide)m = (deoxyribonucleotide)n+m + AMP + beta-nicotinamide D-nucleotide.. In terms of biological role, DNA ligase that catalyzes the formation of phosphodiester linkages between 5'-phosphoryl and 3'-hydroxyl groups in double-stranded DNA using NAD as a coenzyme and as the energy source for the reaction. It is essential for DNA replication and repair of damaged DNA. The protein is DNA ligase of Bdellovibrio bacteriovorus (strain ATCC 15356 / DSM 50701 / NCIMB 9529 / HD100).